Consider the following 98-residue polypeptide: NADH-ubiquinone oxidoreductase chain 4L (98 aa).

3 consecutive transmembrane segments (helical) span residues 1-21 (MTMV…GLLM), 29-49 (SLLC…ITIL), and 61-81 (IILL…LVMV).

This sequence belongs to the complex I subunit 4L family. In terms of assembly, core subunit of respiratory chain NADH dehydrogenase (Complex I) which is composed of 45 different subunits.

Its subcellular location is the mitochondrion inner membrane. The catalysed reaction is a ubiquinone + NADH + 5 H(+)(in) = a ubiquinol + NAD(+) + 4 H(+)(out). Its function is as follows. Core subunit of the mitochondrial membrane respiratory chain NADH dehydrogenase (Complex I) which catalyzes electron transfer from NADH through the respiratory chain, using ubiquinone as an electron acceptor. Part of the enzyme membrane arm which is embedded in the lipid bilayer and involved in proton translocation. The protein is NADH-ubiquinone oxidoreductase chain 4L (MT-ND4L) of Ommatophoca rossii (Ross seal).